The sequence spans 789 residues: Probable Xaa-Pro aminopeptidase SNOG_02267 (789 aa).

The Mn(2+) site is built by Asp-240, Asp-251, Glu-375, and Glu-416. 2 disordered regions span residues 607–658 (SMSK…TGLA) and 670–704 (NHVS…DDAL). Polar residues predominate over residues 622-637 (VISQKQIRNRRSVSST). A compositionally biased stretch (basic and acidic residues) spans 638–650 (ARHDLRGDRERPQ).

Belongs to the peptidase M24B family. The cofactor is Mn(2+).

It carries out the reaction Release of any N-terminal amino acid, including proline, that is linked to proline, even from a dipeptide or tripeptide.. Its function is as follows. Catalyzes the removal of a penultimate prolyl residue from the N-termini of peptides. The sequence is that of Probable Xaa-Pro aminopeptidase SNOG_02267 from Phaeosphaeria nodorum (strain SN15 / ATCC MYA-4574 / FGSC 10173) (Glume blotch fungus).